Here is a 517-residue protein sequence, read N- to C-terminus: ATP synthase subunit alpha 2 (517 aa).

Residue 173–180 participates in ATP binding; it reads GDRQTGKT.

The protein belongs to the ATPase alpha/beta chains family. As to quaternary structure, F-type ATPases have 2 components, CF(1) - the catalytic core - and CF(0) - the membrane proton channel. CF(1) has five subunits: alpha(3), beta(3), gamma(1), delta(1), epsilon(1). CF(0) has three main subunits: a(1), b(2) and c(9-12). The alpha and beta chains form an alternating ring which encloses part of the gamma chain. CF(1) is attached to CF(0) by a central stalk formed by the gamma and epsilon chains, while a peripheral stalk is formed by the delta and b chains.

It localises to the cell inner membrane. It catalyses the reaction ATP + H2O + 4 H(+)(in) = ADP + phosphate + 5 H(+)(out). In terms of biological role, produces ATP from ADP in the presence of a proton gradient across the membrane. The alpha chain is a regulatory subunit. The chain is ATP synthase subunit alpha 2 from Legionella pneumophila (strain Corby).